A 249-amino-acid polypeptide reads, in one-letter code: Sugar fermentation stimulation protein homolog (249 aa).

This sequence belongs to the SfsA family.

This Rhizobium rhizogenes (strain K84 / ATCC BAA-868) (Agrobacterium radiobacter) protein is Sugar fermentation stimulation protein homolog.